Here is a 403-residue protein sequence, read N- to C-terminus: Phosphoglycerate kinase (403 aa).

Residues 22–24 (DFN), Arg-37, 60–63 (HFGR), Arg-119, and Arg-152 contribute to the substrate site. ATP-binding positions include Lys-202, Glu-324, and 354–357 (GGDT).

This sequence belongs to the phosphoglycerate kinase family. Monomer.

The protein localises to the cytoplasm. The enzyme catalyses (2R)-3-phosphoglycerate + ATP = (2R)-3-phospho-glyceroyl phosphate + ADP. It functions in the pathway carbohydrate degradation; glycolysis; pyruvate from D-glyceraldehyde 3-phosphate: step 2/5. The chain is Phosphoglycerate kinase from Maricaulis maris (strain MCS10) (Caulobacter maris).